We begin with the raw amino-acid sequence, 549 residues long: Undecaprenyl phosphate-alpha-4-amino-4-deoxy-L-arabinose arabinosyl transferase (549 aa).

The next 12 helical transmembrane spans lie at 9-29 (LLLI…GLWI), 80-100 (LFGV…LAYL), 112-132 (SLAC…SGYA), 136-156 (PQFT…LDAG), 176-196 (FLTK…PYML), 204-224 (LLGY…PWAL), 256-276 (PWWF…GLLP), 288-308 (QAPV…FSLS), 312-332 (LPTY…HALV), 346-366 (NGLL…YLQL), 376-396 (FELF…LAQW), and 402-422 (AWAA…AAMP).

The protein belongs to the glycosyltransferase 83 family.

It localises to the cell inner membrane. It catalyses the reaction 4-amino-4-deoxy-alpha-L-arabinopyranosyl di-trans,octa-cis-undecaprenyl phosphate + lipid IVA = lipid IIA + di-trans,octa-cis-undecaprenyl phosphate.. The protein operates within lipopolysaccharide metabolism; 4-amino-4-deoxy-beta-L-arabinose-lipid A biosynthesis. In terms of biological role, catalyzes the transfer of the L-Ara4N moiety of the glycolipid undecaprenyl phosphate-alpha-L-Ara4N to lipid A. The modified arabinose is attached to lipid A and is required for resistance to polymyxin and cationic antimicrobial peptides. This Pseudomonas aeruginosa (strain ATCC 15692 / DSM 22644 / CIP 104116 / JCM 14847 / LMG 12228 / 1C / PRS 101 / PAO1) protein is Undecaprenyl phosphate-alpha-4-amino-4-deoxy-L-arabinose arabinosyl transferase.